Consider the following 193-residue polypeptide: Ribonuclease HII (193 aa).

The RNase H type-2 domain maps to 15–193 (CIVAGIDEAG…PYHRRSFRCC (179 aa)). A divalent metal cation is bound by residues Asp21, Glu22, and Asp112.

It belongs to the RNase HII family. Mn(2+) serves as cofactor. It depends on Mg(2+) as a cofactor.

Its subcellular location is the cytoplasm. The enzyme catalyses Endonucleolytic cleavage to 5'-phosphomonoester.. In terms of biological role, endonuclease that specifically degrades the RNA of RNA-DNA hybrids. This is Ribonuclease HII from Rickettsia africae (strain ESF-5).